The sequence spans 230 residues: Leucyl/phenylalanyl-tRNA--protein transferase (230 aa).

Belongs to the L/F-transferase family.

The protein resides in the cytoplasm. It catalyses the reaction N-terminal L-lysyl-[protein] + L-leucyl-tRNA(Leu) = N-terminal L-leucyl-L-lysyl-[protein] + tRNA(Leu) + H(+). It carries out the reaction N-terminal L-arginyl-[protein] + L-leucyl-tRNA(Leu) = N-terminal L-leucyl-L-arginyl-[protein] + tRNA(Leu) + H(+). The catalysed reaction is L-phenylalanyl-tRNA(Phe) + an N-terminal L-alpha-aminoacyl-[protein] = an N-terminal L-phenylalanyl-L-alpha-aminoacyl-[protein] + tRNA(Phe). Functionally, functions in the N-end rule pathway of protein degradation where it conjugates Leu, Phe and, less efficiently, Met from aminoacyl-tRNAs to the N-termini of proteins containing an N-terminal arginine or lysine. In Proteus mirabilis (strain HI4320), this protein is Leucyl/phenylalanyl-tRNA--protein transferase.